Consider the following 113-residue polypeptide: U11-theraphotoxin-Hhn1a (113 aa).

Positions 1–21 are cleaved as a signal peptide; that stretch reads MNTVRVTFLLVFVLAVSLGQA. Residues 22–74 constitute a propeptide that is removed on maturation; the sequence is DKDENRMEMQEKTEQGESYLDFAENLLLQKLEELEAKLLEEDSEESRNSRQKR. 3 cysteine pairs are disulfide-bonded: Cys75/Cys90, Cys82/Cys95, and Cys89/Cys110.

It belongs to the neurotoxin 14 (magi-1) family. 01 (HNTX-16) subfamily. Expressed by the venom gland.

Its subcellular location is the secreted. Probable ion channel inhibitor. This chain is U11-theraphotoxin-Hhn1a, found in Cyriopagopus hainanus (Chinese bird spider).